Reading from the N-terminus, the 142-residue chain is Large ribosomal subunit protein uL11 (142 aa).

Belongs to the universal ribosomal protein uL11 family. Part of the ribosomal stalk of the 50S ribosomal subunit. Interacts with L10 and the large rRNA to form the base of the stalk. L10 forms an elongated spine to which L12 dimers bind in a sequential fashion forming a multimeric L10(L12)X complex. Post-translationally, one or more lysine residues are methylated.

In terms of biological role, forms part of the ribosomal stalk which helps the ribosome interact with GTP-bound translation factors. The protein is Large ribosomal subunit protein uL11 of Acidithiobacillus ferrooxidans (strain ATCC 23270 / DSM 14882 / CIP 104768 / NCIMB 8455) (Ferrobacillus ferrooxidans (strain ATCC 23270)).